The sequence spans 339 residues: Fructose-1,6-bisphosphatase isozyme 2 (339 aa).

The interval D3–D10 is important for interaction with ALDOA. AMP is bound by residues V18 and T28–T32. Mg(2+) contacts are provided by D69 and E98. K113–Y114 is a binding site for AMP. Mg(2+) contacts are provided by D119, L121, and D122. D122 contacts substrate. R141 contacts AMP. The Nuclear localization signal motif lies at K204–K208. N213–Y216 lines the substrate pocket. Phosphotyrosine is present on residues Y216 and Y219. Residues Y245 to M249, Y265, and K275 contribute to the substrate site. E281 serves as a coordination point for Mg(2+).

It belongs to the FBPase class 1 family. Homotetramer. Interacts with ALDOA; the interaction blocks inhibition by physiological concentrations of AMP and reduces inhibition by Ca(2+). Interacts with alpha-actinin and F-actin. The cofactor is Mg(2+). As to expression, expressed in muscle, intestine, brain and placenta and very weakly in liver.

The protein localises to the cell junction. Its subcellular location is the cytoplasm. The protein resides in the nucleus. It is found in the myofibril. It localises to the sarcomere. The protein localises to the z line. It catalyses the reaction beta-D-fructose 1,6-bisphosphate + H2O = beta-D-fructose 6-phosphate + phosphate. Its pathway is carbohydrate biosynthesis; gluconeogenesis. With respect to regulation, subject to complex allosteric regulation. The enzyme can assume an active R-state, or an inactive T-state. Intermediate conformations may exist. AMP acts as an allosteric inhibitor. Fructose 2,6-bisphosphate acts as a competitive inhibitor. Strongly inhibited by Ca(2+). Its function is as follows. Catalyzes the hydrolysis of fructose 1,6-bisphosphate to fructose 6-phosphate in the presence of divalent cations and probably participates in glycogen synthesis from carbohydrate precursors, such as lactate. The polypeptide is Fructose-1,6-bisphosphatase isozyme 2 (Fbp2) (Mus musculus (Mouse)).